The chain runs to 671 residues: MTLLSPGIENKEINLASAIGRAATGRAAMVGKFEWGPAYSITQVTSESDLVTIFGRPNDYTAASFMTANNFLKYGNDLRLVRICDATTAQNATPLYNAVEYTIGASNGCVVGDDITITYSGVGALTAKGKVLEVDAGNNNAASKIFLPSAEIVAAAKSDGNYPSVGTITLQPTQGDIALTNIEIIDTGSVYFPNIELAFDALTAIETEGGALKYADLIEKQGFPRLSARYVGDFGDAISVEIINYADYQTAFAFAAGHTLGDIELPIYPDGGTRSINLSSYFTFGPSNSNQYAVIVRVSGEVEEAFIVSTNPGDKDVNGQSIFIDEYFENSGSAYITAIAEGWKTESGAYNFGGGSDANAGADDWMFGLDMLSDPEVLYTNLVIAGNAAAEEVSIASTVQKYAIDSVGNVRQDCVVFVSPPQSLIVNKQAGTAVANIQGWRTGIDPTNGQAVVDNLNVSTTYAVIDGNYKYQYDKYNDRNRWVPLAGDIAGLCAYTDQVSQPWMSPAGFNRGQIKGVNRLAVDLRRAHRDALYQIGINPVVGFAGQGFVLYGDKTATQQASAFDRINVRRLFNLLKKAISDAAKYRLFELNDEFTRSSFKSEIDAYLTNIQDLGGVYDFRVVCDETNNPGSVIDRNEFVASIYVKPAKSINFITLNFVATSTDADFAEIIG.

This sequence belongs to the myoviridae tail sheath protein family. Homomultimer.

Its subcellular location is the virion. The protein resides in the host cytoplasm. Its function is as follows. Polymerizes as an extended structure around the baseplate-tail tube complex. During ejection, the sheath shifts to a contracted form, thereby making the inner tail tube protrude through the host cell envelope. The chain is Tail sheath protein from Vibrio phage KVP40 (isolate Vibrio parahaemolyticus/Japan/Matsuzaki/1991) (KVP40).